Consider the following 893-residue polypeptide: Translation initiation factor IF-2 (893 aa).

2 disordered regions span residues 135–169 (KAKA…KAEE) and 201–300 (ENEK…ESMD). Residues 201–224 (ENEKRWAEEEKARKEAEKTVDHHV) are compositionally biased toward basic and acidic residues. The segment covering 251–265 (PSANAGNNANANAGA) has biased composition (low complexity). Residues 393-562 (SRAPVVTIMG…LLEAEVLELK (170 aa)) enclose the tr-type G domain. A G1 region spans residues 402-409 (GHVDHGKT). Position 402-409 (402-409 (GHVDHGKT)) interacts with GTP. Residues 427-431 (GITQH) are G2. The G3 stretch occupies residues 448–451 (DTPG). GTP-binding positions include 448 to 452 (DTPGH) and 502 to 505 (NKMD). Residues 502 to 505 (NKMD) are G4. Residues 538–540 (SAK) are G5.

Belongs to the TRAFAC class translation factor GTPase superfamily. Classic translation factor GTPase family. IF-2 subfamily.

The protein resides in the cytoplasm. Its function is as follows. One of the essential components for the initiation of protein synthesis. Protects formylmethionyl-tRNA from spontaneous hydrolysis and promotes its binding to the 30S ribosomal subunits. Also involved in the hydrolysis of GTP during the formation of the 70S ribosomal complex. This is Translation initiation factor IF-2 from Shewanella halifaxensis (strain HAW-EB4).